The following is a 321-amino-acid chain: Glucokinase (321 aa).

Residue 8–13 (GDVGGT) coordinates ATP.

This sequence belongs to the bacterial glucokinase family.

The protein resides in the cytoplasm. The catalysed reaction is D-glucose + ATP = D-glucose 6-phosphate + ADP + H(+). The polypeptide is Glucokinase (Salmonella heidelberg (strain SL476)).